Here is a 372-residue protein sequence, read N- to C-terminus: Serine/threonine-protein kinase 17B (372 aa).

The Protein kinase domain maps to 33–293; the sequence is TLTPKELGRG…AESCLSHSWL (261 aa). ATP contacts are provided by residues 39 to 47 and K62; that span reads LGRGKFAVV. D158 serves as the catalytic Proton acceptor. The disordered stretch occupies residues 305 to 348; sequence EETSGSSQIQDLTLRSSEEKTSKSSCNGSCGAREDKENIPEDGS. Residues 307-319 show a composition bias toward polar residues; sequence TSGSSQIQDLTLR.

It belongs to the protein kinase superfamily. CAMK Ser/Thr protein kinase family. DAP kinase subfamily. Interacts with CHP1; the interaction induces CHP1 to translocate from the Golgi to the nucleus. Autophosphorylated.

The protein localises to the nucleus. It localises to the cell membrane. The protein resides in the endoplasmic reticulum-Golgi intermediate compartment. It catalyses the reaction L-seryl-[protein] + ATP = O-phospho-L-seryl-[protein] + ADP + H(+). The enzyme catalyses L-threonyl-[protein] + ATP = O-phospho-L-threonyl-[protein] + ADP + H(+). In terms of biological role, acts as a positive regulator of apoptosis. Phosphorylates myosin light chains. The protein is Serine/threonine-protein kinase 17B (Stk17b) of Mus musculus (Mouse).